The chain runs to 445 residues: Phosphoglucosamine mutase (445 aa).

Serine 102 serves as the catalytic Phosphoserine intermediate. Residues serine 102, aspartate 241, aspartate 243, and aspartate 245 each coordinate Mg(2+). Phosphoserine is present on serine 102.

Belongs to the phosphohexose mutase family. Mg(2+) serves as cofactor. In terms of processing, activated by phosphorylation.

It catalyses the reaction alpha-D-glucosamine 1-phosphate = D-glucosamine 6-phosphate. Functionally, catalyzes the conversion of glucosamine-6-phosphate to glucosamine-1-phosphate. This is Phosphoglucosamine mutase from Aliivibrio fischeri (strain MJ11) (Vibrio fischeri).